The primary structure comprises 356 residues: Histidinol-phosphate aminotransferase (356 aa).

At Lys-208 the chain carries N6-(pyridoxal phosphate)lysine.

It belongs to the class-II pyridoxal-phosphate-dependent aminotransferase family. Histidinol-phosphate aminotransferase subfamily. In terms of assembly, homodimer. Pyridoxal 5'-phosphate is required as a cofactor.

It catalyses the reaction L-histidinol phosphate + 2-oxoglutarate = 3-(imidazol-4-yl)-2-oxopropyl phosphate + L-glutamate. Its pathway is amino-acid biosynthesis; L-histidine biosynthesis; L-histidine from 5-phospho-alpha-D-ribose 1-diphosphate: step 7/9. The polypeptide is Histidinol-phosphate aminotransferase (Lactococcus lactis subsp. cremoris (strain SK11)).